An 843-amino-acid chain; its full sequence is Translation initiation factor IF-2 (843 aa).

2 disordered regions span residues 55-185 and 209-228; these read AEAV…EDRD and KVEE…QVKV. Positions 62–106 are enriched in basic and acidic residues; sequence PQEKPKKSAPKKEEKPKEEVKKEAEEKVAASKKEEEKPQEKKSVE. Over residues 114 to 128 the composition is skewed to basic residues; sequence LKKRRGLVIVKKKRP. The span at 129–141 shows a compositional bias: basic and acidic residues; it reads KVEPKVEEKEAKQ. The segment covering 156 to 165 has biased composition (basic residues); it reads LKRKPKKAKK. Basic and acidic residues-rich tracts occupy residues 171 to 185 and 209 to 221; these read KKNE…EDRD and KVEE…EPQK. The region spanning 342–511 is the tr-type G domain; the sequence is ERPPVITIMG…LLQAEIMELK (170 aa). The interval 351–358 is G1; sequence GHVDHGKT. 351–358 contributes to the GTP binding site; sequence GHVDHGKT. The interval 376-380 is G2; it reads GITQH. Positions 397–400 are G3; sequence DTPG. GTP contacts are provided by residues 397-401 and 451-454; these read DTPGH and NKID. Residues 451–454 form a G4 region; that stretch reads NKID. The G5 stretch occupies residues 487-489; that stretch reads SAK.

This sequence belongs to the TRAFAC class translation factor GTPase superfamily. Classic translation factor GTPase family. IF-2 subfamily.

It is found in the cytoplasm. Its function is as follows. One of the essential components for the initiation of protein synthesis. Protects formylmethionyl-tRNA from spontaneous hydrolysis and promotes its binding to the 30S ribosomal subunits. Also involved in the hydrolysis of GTP during the formation of the 70S ribosomal complex. The polypeptide is Translation initiation factor IF-2 (Nitratiruptor sp. (strain SB155-2)).